The sequence spans 320 residues: GMP reductase (320 aa).

Catalysis depends on C174, which acts as the Thioimidate intermediate. 203 to 226 (IIADGGLRVHGDIAKSIRMGASFC) contributes to the NADP(+) binding site.

This sequence belongs to the IMPDH/GMPR family. GuaC type 2 subfamily.

The enzyme catalyses IMP + NH4(+) + NADP(+) = GMP + NADPH + 2 H(+). Its function is as follows. Catalyzes the irreversible NADPH-dependent deamination of GMP to IMP. It functions in the conversion of nucleobase, nucleoside and nucleotide derivatives of G to A nucleotides, and in maintaining the intracellular balance of A and G nucleotides. This is GMP reductase from Mycoplasma mycoides subsp. mycoides SC (strain CCUG 32753 / NCTC 10114 / PG1).